A 130-amino-acid polypeptide reads, in one-letter code: Small ribosomal subunit protein uS9 (130 aa).

It belongs to the universal ribosomal protein uS9 family.

The chain is Small ribosomal subunit protein uS9 from Colwellia psychrerythraea (strain 34H / ATCC BAA-681) (Vibrio psychroerythus).